The primary structure comprises 307 residues: Regulating synaptic membrane exocytosis protein 3 (307 aa).

Residues 86-120 (STETGIAVEMRSRVTRQGSRESTDGSTNSNSSEGT) are disordered. The segment covering 109–119 (DGSTNSNSSEG) has biased composition (polar residues). The 119-residue stretch at 155-273 (PMGDVHIAIM…DLSAVVTGWY (119 aa)) folds into the C2 domain. 2 positions are modified to phosphoserine: serine 294 and serine 297.

In terms of assembly, binds PPFIA3. Does not bind RAB3. As to expression, expressed exclusively in brain with significant levels in cortex, cerebellum and olfactory bulb. Detected at lower level in hippocampus.

It localises to the synapse. In terms of biological role, regulates synaptic membrane exocytosis. In Rattus norvegicus (Rat), this protein is Regulating synaptic membrane exocytosis protein 3 (Rims3).